We begin with the raw amino-acid sequence, 579 residues long: MVSKECCRNEIRAAIRQLSDRCLYSAAKWAGEQLVGIEQDPSNFTPANTRFQRGSSSIRRRFSTNESISTPLPSVGFSQAATPLPEEDEAIDGDIYLLAKSYFDCREYRRASHMLRDQVSKKSLFLRYYALYLAGEKRKEEEMIELEGPLGKSDAINRELVSLERDLSALRRTGAIDSFGLYLYGVVLKEKGNESLARASLVESVNSYPWNWSAWSELQSLCTSIEILNSLNLNNHWMKEFFLGNAYQELRMHTESLAKYEYLQGIFSFSNYIQAQTAKAQYSLREFDQVEIMFEELLRNDPYRVEDMDLYSNVLYAKEACAALSYLAHKVFLTDKYRPESCCIIGNYYSLKGQHEKAVMYFRRALKLNKKYLSAWTLMGHEYVEMKNTPAAIDAYRRAVDINPTDYRAWYGLGQAYEMMGMPFYALHYFRKSIFFLPNDSRLWIAMAKCYQTEQLYMLEEAIKCYKRAVNCTDTEGIALNQLAKLHQKLGRNEEAAYYFEKDLERMDAEGLEGPNMFEALVFLATHFKNHKKFEEAEVYCTRLLDYSGPEKEKAKSLLRGIRMAQTGFPSMDLEHFPI.

TPR repeat units follow at residues 237–270 (WMKEFFLGNAYQELRMHTESLAKYEYLQGIFSFS), 272–304 (YIQAQTAKAQYSLREFDQVEIMFEELLRNDPYR), 339–372 (PESCCIIGNYYSLKGQHEKAVMYFRRALKLNKKY), 374–406 (SAWTLMGHEYVEMKNTPAAIDAYRRAVDINPTD), 408–440 (RAWYGLGQAYEMMGMPFYALHYFRKSIFFLPND), 442–476 (RLWIAMAKCYQTEQLYMLEEAIKCYKRAVNCTDTE), 477–510 (GIALNQLAKLHQKLGRNEEAAYYFEKDLERMDAE), and 518–551 (FEALVFLATHFKNHKKFEEAEVYCTRLLDYSGPE).

It belongs to the APC8/CDC23 family. The APC/C is composed of at least 10 subunits. Interacts with APC2.

Its subcellular location is the nucleus. Its pathway is protein modification; protein ubiquitination. Functionally, component of the anaphase promoting complex/cyclosome (APC/C), a cell cycle-regulated E3 ubiquitin-protein ligase complex that controls progression through mitosis and the G1 phase of the cell cycle. The APC/C complex controls several key steps in the cell cycle by mediating ubiquitination and subsequent degradation of target proteins such as cyclins. The APC/C complex is required for the female gametophyte development and is involved in several aspect of development by controlling cell division and cell elongation. Involved in the control of endoreduplication. The polypeptide is Anaphase-promoting complex subunit 8 (APC8) (Arabidopsis thaliana (Mouse-ear cress)).